We begin with the raw amino-acid sequence, 365 residues long: Mannitol dehydrogenase (365 aa).

The Zn(2+) site is built by C50, H72, C103, C106, C109, C117, and C166.

This sequence belongs to the zinc-containing alcohol dehydrogenase family. Zn(2+) serves as cofactor.

The protein localises to the cytoplasm. It catalyses the reaction D-mannitol + NAD(+) = D-mannose + NADH + H(+). In terms of biological role, oxidizes mannitol to mannose. Provides the initial step by which translocated mannitol is committed to central metabolism and, by regulating mannitol pool size, is important in regulating salt tolerance at the cellular level. The sequence is that of Mannitol dehydrogenase (MTD) from Apium graveolens (Celery).